A 155-amino-acid chain; its full sequence is SsrA-binding protein (155 aa).

It belongs to the SmpB family.

The protein localises to the cytoplasm. In terms of biological role, required for rescue of stalled ribosomes mediated by trans-translation. Binds to transfer-messenger RNA (tmRNA), required for stable association of tmRNA with ribosomes. tmRNA and SmpB together mimic tRNA shape, replacing the anticodon stem-loop with SmpB. tmRNA is encoded by the ssrA gene; the 2 termini fold to resemble tRNA(Ala) and it encodes a 'tag peptide', a short internal open reading frame. During trans-translation Ala-aminoacylated tmRNA acts like a tRNA, entering the A-site of stalled ribosomes, displacing the stalled mRNA. The ribosome then switches to translate the ORF on the tmRNA; the nascent peptide is terminated with the 'tag peptide' encoded by the tmRNA and targeted for degradation. The ribosome is freed to recommence translation, which seems to be the essential function of trans-translation. The chain is SsrA-binding protein from Halothermothrix orenii (strain H 168 / OCM 544 / DSM 9562).